Reading from the N-terminus, the 1089-residue chain is Nonsense-mediated mRNA decay protein 2 (1089 aa).

The tract at residues 819–951 is disordered; it reads DRVKGSSASI…DLDADRDIEM (133 aa). 2 stretches are compositionally biased toward acidic residues: residues 841 to 866 and 885 to 943; these read ITEDDEDEDDENDDGVDLLGEDEDAE and ESED…GGDL.

The protein localises to the cytoplasm. Functionally, involved in nonsense-mediated decay of mRNAs containing premature stop codons. It interacts, via its C-terminus, with NAM7/UPF1. Could be involved in determining the efficiency of translational termination or reinitiation or factors involved in the initial assembly of an initiation- and termination-competent mRNP. The protein is Nonsense-mediated mRNA decay protein 2 (NMD2) of Saccharomyces cerevisiae (strain ATCC 204508 / S288c) (Baker's yeast).